A 977-amino-acid chain; its full sequence is Vacuolar protein sorting-associated protein 54 (977 aa).

Ser-8 carries the post-translational modification Phosphoserine. Residues 239-261 (HELQDYLKKTTQAVKMLRDKIAQ) are a coiled coil. The tract at residues 528–573 (ASAAVDTTSQRNTSPHSEPCSSDSVSEPECTTDSSSSKEQTSACAP) is disordered. The span at 532–570 (VDTTSQRNTSPHSEPCSSDSVSEPECTTDSSSSKEQTSA) shows a compositional bias: polar residues.

Belongs to the VPS54 family. In terms of assembly, component of the Golgi-associated retrograde protein (GARP) complex, also called VFT (VPS fifty-three) complex, composed of VPS51, VPS52, VPS53 and VPS54. EIPR1 interacts with GARP complex and mediates its recruitment to the trans-Golgi network. Interacts with VPS51 in an EIPR1-independent manner.

It is found in the golgi apparatus. It localises to the trans-Golgi network. The protein resides in the membrane. In terms of biological role, acts as a component of the GARP complex that is involved in retrograde transport from early and late endosomes to the trans-Golgi network (TGN). The GARP complex is required for the maintenance of the cycling of mannose 6-phosphate receptors between the TGN and endosomes, this cycling is necessary for proper lysosomal sorting of acid hydrolases such as CTSD. Within the GARP complex, required to tether the complex to the TGN. Not involved in endocytic recycling. In Mus musculus (Mouse), this protein is Vacuolar protein sorting-associated protein 54 (Vps54).